Consider the following 2422-residue polypeptide: Non-reducing polyketide synthase trt4 (2422 aa).

The tract at residues 14 to 196 is N-terminal acylcarrier protein transacylase domain (SAT); it reads VLFGPKCPKT…HHSDHTSVVQ (183 aa). A disordered region spans residues 289 to 314; it reads VEPPDSHHNTNTTQDSDVTTNASPLT. The span at 297–312 shows a compositional bias: polar residues; that stretch reads NTNTTQDSDVTTNASP. Residues 329 to 745 form the Ketosynthase family 3 (KS3) domain; it reads TVPIAVTGMA…GSNAAIVLQE (417 aa). Active-site for beta-ketoacyl synthase activity residues include Cys-494, His-629, and His-668. Residues 856–1121 are malonyl-CoA:ACP transacylase (MAT) domain; that stretch reads LCFGGQTGNT…CPIDLSGPQA (266 aa). Residue Ser-904 is the For acyl/malonyl transferase activity of the active site. Positions 1190–1316 are N-terminal hotdog fold; sequence PSLVKLLNND…GKISISSEAN (127 aa). In terms of domain architecture, PKS/mFAS DH spans 1190-1495; sequence PSLVKLLNND…FTCVSIQSLK (306 aa). The product template (PT) domain stretch occupies residues 1191–1494; the sequence is SLVKLLNNDG…TFTCVSIQSL (304 aa). His-1221 functions as the Proton acceptor; for dehydratase activity in the catalytic mechanism. The tract at residues 1345–1495 is C-terminal hotdog fold; it reads SSGLKRSTVY…FTCVSIQSLK (151 aa). Asp-1402 (proton donor; for dehydratase activity) is an active-site residue. The Carrier domain maps to 1535-1612; it reads SRSEDGLRVV…GLVQRIFPGG (78 aa). Ser-1572 is subject to O-(pantetheine 4'-phosphoryl)serine. Residues 1615-1636 are disordered; sequence AHVETHSQPPDKIGITTGDRMP. The segment at 1774-2007 is methyltransferase (CMeT) domain; it reads QHASEHKLLH…GFNWVDWTDN (234 aa). Residues 2036 to 2383 form a thioesterase (TE) domain region; that stretch reads NAVAEETLVY…LAPHIPTDEY (348 aa). Residues Ser-2159, Asp-2320, and His-2352 each act as for thioesterase activity in the active site.

It catalyses the reaction 3 malonyl-CoA + acetyl-CoA + 2 S-adenosyl-L-methionine = 3,5-dimethylorsellinate + 2 S-adenosyl-L-homocysteine + 3 CO2 + 4 CoA. It participates in secondary metabolite biosynthesis; terpenoid biosynthesis. Functionally, non-reducing polyketide synthase; part of the gene cluster that mediates the biosynthesis of terretonin, a fungal meroterpenoid that acts as a mycotoxin. The first step of the pathway is the synthesis of 3,5-dimethylorsellinic acid (DMOA) by the polyketide synthase trt4. DMOA is then prenylated into farnesyl-DMOA by the polyprenyl transferase trt2. Methylation by the methyltransferase trt5 then leads to farnesyl-DMOA methyl ester which is further subject to epoxidation by the FAD-dependent monooxygenase trt8 to yield epoxyfarnesyl-DMOA methyl ester. Cyclization of epoxyfarnesyl-DMOA methyl ester by the terpene cyclase trt1 leads to a tetracycle intermediate which is in turn converted to preterretonin. Dehydrogenase trt9 comes next to transform preterretonin to preterrenoid. The FAD-dependent monooxygenase trt3 is then required for the C-hydroxylation at C16 of preterrenoid to yield terrenoid. The cytochrome P450 trt6 catalyzes three successive oxidations to transform terrenoid into an unstable intermediate, which then undergoes the D-ring expansion and unusual rearrangement of the methoxy group to afford the core skeleton of terretonin. Trt14 catalyzes the D-ring expansion of terretonin involving intramolecular methoxy rearrangement as well as the hydrolysis of the expanded D-ring and the methyl ester moiety. Finally, the nonheme iron-dependent dioxygenase trt7 accomplishes the last two oxidation reactions steps to complete the biosynthesis of terretonin. Terretonin C is produced via spontaneous decarboxylation of the terretonin precursor. Another shunt product of the terretonin biosynthesis is dihydrofarnesyl-DMOA, derived from epoxyfarnesyl-DMOA through hydrolysis of the epoxide. In Aspergillus terreus (strain NIH 2624 / FGSC A1156), this protein is Non-reducing polyketide synthase trt4.